Here is a 492-residue protein sequence, read N- to C-terminus: Protein KOKOPELLI (492 aa).

Disordered stretches follow at residues 218 to 354 (VTSP…RNVM) and 394 to 426 (SKFHHKHQEKSKERKRPMSESKGLTTHKQQHQG). Residues 256–270 (QETETFDDDSSETEA) are compositionally biased toward acidic residues. Residues 287-305 (STSQEYSGETGSSSGSEWE) show a composition bias toward low complexity. Residues 317-336 (ESSYPPQNDDSVSEVSTSPP) show a composition bias toward polar residues. 2 stretches are compositionally biased toward basic and acidic residues: residues 337-348 (HTDRDTSREPGK) and 403-412 (KSKERKRPMS).

In terms of tissue distribution, mostly expressed in pollen and open flowers and, to a lower extent, in closed flowers.

In terms of biological role, positively regulates reproductive function by facilitating male gametophyte formation and double fertilization. This Arabidopsis thaliana (Mouse-ear cress) protein is Protein KOKOPELLI.